A 263-amino-acid chain; its full sequence is MLQIELQKWIQRFSSTIRLFFRLLIRLKTIKVNTNNLVEQIYIVGPGSLNITLLTACFISMVFTMQIAKEFLYLDAASAIGAVIVIAFTRELSPVLTAVIIAGKIGSSFTAEIATMETTEQIDALYLLNTNPIDYLVFPKVASCFLMLPILSIISLTASIAISLFVAFVMYDIPSSVFLKSAFNALSISDFLICLEKSMFFAIIIGFISCQWGLTSNGGAKGVGNSTTSSVVTILFTVFITDFVLSYFMFQTTGSSIAQANNI.

Transmembrane regions (helical) follow at residues 43–63 (IVGP…SMVF), 70–89 (EFLY…IAFT), 150–170 (ILSI…AFVM), 188–208 (ISDF…IGFI), and 230–250 (SVVT…YFMF).

This sequence belongs to the MlaE permease family.

It is found in the plastid. The protein localises to the chloroplast membrane. Functionally, could be part of an ABC transporter complex. The polypeptide is Probable ABC transporter permease protein ycf63 (ycf63) (Pyropia yezoensis (Susabi-nori)).